Here is a 150-residue protein sequence, read N- to C-terminus: UPF0178 protein Ssed_1350 (150 aa).

The protein belongs to the UPF0178 family.

The chain is UPF0178 protein Ssed_1350 from Shewanella sediminis (strain HAW-EB3).